A 439-amino-acid polypeptide reads, in one-letter code: Xylose isomerase (439 aa).

Active-site residues include His-101 and Asp-104. Residues Glu-232, Glu-268, His-271, Asp-296, Asp-307, Asp-309, and Asp-339 each contribute to the Mg(2+) site.

The protein belongs to the xylose isomerase family. In terms of assembly, homotetramer. Requires Mg(2+) as cofactor.

The protein localises to the cytoplasm. The catalysed reaction is alpha-D-xylose = alpha-D-xylulofuranose. The protein is Xylose isomerase (xylA) of Lactococcus lactis subsp. lactis (strain IL1403) (Streptococcus lactis).